A 123-amino-acid chain; its full sequence is Methicillin resistance regulatory protein MecI (123 aa).

Positions 7–71 form a DNA-binding region, H-T-H motif; sequence EISSAEWEFM…KDNKIFQYYS (65 aa). Residues 74–123 are important for dimerization; sequence EESDIKYKTSKNFINKVYKGGFNSLVLNFVEKEDLSQDEIEELRNILNKK.

The protein belongs to the BlaI transcriptional regulatory family. In terms of assembly, monomer and homodimer. In terms of processing, upon exposure to beta-lactams, proteolytic cleavage at a single site impairs dimerization and abolishes repressor activity.

The protein resides in the cytoplasm. Functionally, transcriptional repressor that constitutively blocks the transcription of the gene for the penicillin-binding protein MecA. Binds DNA as a dimer. The protein is Methicillin resistance regulatory protein MecI (mecI) of Staphylococcus aureus (strain Mu50 / ATCC 700699).